Reading from the N-terminus, the 548-residue chain is Chaperonin GroEL (548 aa).

ATP is bound by residues 30–33, K51, 87–91, G415, 479–481, and D495; these read TLGP, DGTTT, and NAA.

Belongs to the chaperonin (HSP60) family. As to quaternary structure, forms a cylinder of 14 subunits composed of two heptameric rings stacked back-to-back. Interacts with the co-chaperonin GroES.

It is found in the cytoplasm. The catalysed reaction is ATP + H2O + a folded polypeptide = ADP + phosphate + an unfolded polypeptide.. Together with its co-chaperonin GroES, plays an essential role in assisting protein folding. The GroEL-GroES system forms a nano-cage that allows encapsulation of the non-native substrate proteins and provides a physical environment optimized to promote and accelerate protein folding. This is Chaperonin GroEL from Pseudomonas fluorescens (strain Pf0-1).